Consider the following 370-residue polypeptide: tRNA-specific 2-thiouridylase MnmA (370 aa).

Residues 11–18 and Met37 contribute to the ATP site; that span reads GMSGGVDS. Positions 97-99 are interaction with target base in tRNA; it reads NPD. Cys102 (nucleophile) is an active-site residue. A disulfide bridge links Cys102 with Cys199. Gly126 serves as a coordination point for ATP. Residues 149 to 151 are interaction with tRNA; it reads KDQ. Cys199 functions as the Cysteine persulfide intermediate in the catalytic mechanism. An interaction with tRNA region spans residues 307 to 308; it reads RY.

The protein belongs to the MnmA/TRMU family.

It is found in the cytoplasm. The enzyme catalyses S-sulfanyl-L-cysteinyl-[protein] + uridine(34) in tRNA + AH2 + ATP = 2-thiouridine(34) in tRNA + L-cysteinyl-[protein] + A + AMP + diphosphate + H(+). Its function is as follows. Catalyzes the 2-thiolation of uridine at the wobble position (U34) of tRNA, leading to the formation of s(2)U34. The sequence is that of tRNA-specific 2-thiouridylase MnmA from Staphylococcus carnosus (strain TM300).